A 455-amino-acid chain; its full sequence is Bifunctional protein GlmU (455 aa).

The segment at 1–226 (MSLDIVILAA…PMEVQGANDR (226 aa)) is pyrophosphorylase. Residues 8 to 11 (LAAG), K22, Q73, 78 to 79 (GT), 99 to 101 (YGD), G136, E151, N166, and N224 each bind UDP-N-acetyl-alpha-D-glucosamine. D101 is a binding site for Mg(2+). N224 contacts Mg(2+). The interval 227-247 (RQLSELERHYQLREGRRLMAQ) is linker. An N-acetyltransferase region spans residues 248–455 (GVTLRDPARF…WKRPEKTKKS (208 aa)). UDP-N-acetyl-alpha-D-glucosamine is bound by residues R330 and K348. H360 acts as the Proton acceptor in catalysis. Positions 363 and 374 each coordinate UDP-N-acetyl-alpha-D-glucosamine. Residues A377, 383 to 384 (NY), S402, A420, and R437 contribute to the acetyl-CoA site.

It in the N-terminal section; belongs to the N-acetylglucosamine-1-phosphate uridyltransferase family. This sequence in the C-terminal section; belongs to the transferase hexapeptide repeat family. In terms of assembly, homotrimer. Requires Mg(2+) as cofactor.

The protein localises to the cytoplasm. It catalyses the reaction alpha-D-glucosamine 1-phosphate + acetyl-CoA = N-acetyl-alpha-D-glucosamine 1-phosphate + CoA + H(+). The enzyme catalyses N-acetyl-alpha-D-glucosamine 1-phosphate + UTP + H(+) = UDP-N-acetyl-alpha-D-glucosamine + diphosphate. Its pathway is nucleotide-sugar biosynthesis; UDP-N-acetyl-alpha-D-glucosamine biosynthesis; N-acetyl-alpha-D-glucosamine 1-phosphate from alpha-D-glucosamine 6-phosphate (route II): step 2/2. It functions in the pathway nucleotide-sugar biosynthesis; UDP-N-acetyl-alpha-D-glucosamine biosynthesis; UDP-N-acetyl-alpha-D-glucosamine from N-acetyl-alpha-D-glucosamine 1-phosphate: step 1/1. The protein operates within bacterial outer membrane biogenesis; LPS lipid A biosynthesis. Catalyzes the last two sequential reactions in the de novo biosynthetic pathway for UDP-N-acetylglucosamine (UDP-GlcNAc). The C-terminal domain catalyzes the transfer of acetyl group from acetyl coenzyme A to glucosamine-1-phosphate (GlcN-1-P) to produce N-acetylglucosamine-1-phosphate (GlcNAc-1-P), which is converted into UDP-GlcNAc by the transfer of uridine 5-monophosphate (from uridine 5-triphosphate), a reaction catalyzed by the N-terminal domain. In Pseudomonas putida (strain GB-1), this protein is Bifunctional protein GlmU.